Consider the following 245-residue polypeptide: Small ribosomal subunit protein uS2 (245 aa).

This sequence belongs to the universal ribosomal protein uS2 family.

This Pseudomonas fluorescens (strain ATCC BAA-477 / NRRL B-23932 / Pf-5) protein is Small ribosomal subunit protein uS2.